The following is a 349-amino-acid chain: 1-acylglycerol-3-phosphate O-acyltransferase ABHD5 (349 aa).

Position 2 is an N-acetylalanine (Ala-2). The 108-residue stretch at 77 to 184 (PLVLLHGFGG…LVEPWGFPER (108 aa)) folds into the AB hydrolase-1 domain. Ser-122 is subject to Phosphoserine. An HXXXXD motif motif is present at residues 327–332 (HYVYAD).

This sequence belongs to the peptidase S33 family. ABHD4/ABHD5 subfamily. Interacts with ADRP, PLIN and PNPLA2. Interacts with PLIN5; promotes interaction with PNPLA2. Widely expressed in various tissues, including lymphocytes, liver, skeletal muscle and brain. Expressed by upper epidermal layers and dermal fibroblasts in skin, hepatocytes and neurons (at protein level).

Its subcellular location is the cytoplasm. It is found in the lipid droplet. It localises to the cytosol. The enzyme catalyses a 1-acyl-sn-glycero-3-phosphate + an acyl-CoA = a 1,2-diacyl-sn-glycero-3-phosphate + CoA. It catalyses the reaction 1-(9Z-octadecenoyl)-sn-glycero-3-phosphate + hexadecanoyl-CoA = 1-(9Z)-octadecenoyl-2-hexadecanoyl-sn-glycero-3-phosphate + CoA. The catalysed reaction is 1-(9Z-octadecenoyl)-sn-glycero-3-phosphate + octadecanoyl-CoA = 1-(9Z-octadecenoyl)-2-octadecanoyl-sn-glycero-3-phosphate + CoA. It carries out the reaction 1-(9Z-octadecenoyl)-sn-glycero-3-phosphate + (9Z)-octadecenoyl-CoA = 1,2-di-(9Z-octadecenoyl)-sn-glycero-3-phosphate + CoA. The enzyme catalyses 1-(9Z-octadecenoyl)-sn-glycero-3-phosphate + (5Z,8Z,11Z,14Z)-eicosatetraenoyl-CoA = 1-(9Z)-octadecenoyl-2-(5Z,8Z,11Z,14Z)-eicosatetraenoyl-sn-glycero-3-phosphate + CoA. It catalyses the reaction eicosanoyl-CoA + 1-(9Z-octadecenoyl)-sn-glycero-3-phosphate = 1-(9Z)-octadecenoyl-2-eicosanoyl-sn-glycero-3-phosphate + CoA. The catalysed reaction is 1-hexadecanoyl-sn-glycero-3-phosphate + (9Z)-octadecenoyl-CoA = 1-hexadecanoyl-2-(9Z-octadecenoyl)-sn-glycero-3-phosphate + CoA. It carries out the reaction 1-octadecanoyl-sn-glycero-3-phosphate + (9Z)-octadecenoyl-CoA = 1-octadecanoyl-2-(9Z-octadecenoyl)-sn-glycero-3-phosphate + CoA. The enzyme catalyses 1-(5Z,8Z,11Z,14Z-eicosatetraenoyl)-sn-glycero-3-phosphate + (9Z)-octadecenoyl-CoA = 1-(5Z,8Z,11Z,14Z)-eicosatetraenoyl-2-(9Z)-octadecenoyl-sn-glycero-3-phosphate + CoA. Acyltransferase activity is inhibited by detergents such as Triton X-100 and 3-[(3-cholamidopropyl)dimethylammonio]-1-propanesulfonate (CHAPS). Acyltransferase activity is inhibited by the presence of magnesium and calcium. In terms of biological role, coenzyme A-dependent lysophosphatidic acid acyltransferase that catalyzes the transfer of an acyl group on a lysophosphatidic acid. Functions preferentially with 1-oleoyl-lysophosphatidic acid followed by 1-palmitoyl-lysophosphatidic acid, 1-stearoyl-lysophosphatidic acid and 1-arachidonoyl-lysophosphatidic acid as lipid acceptor. Functions preferentially with arachidonoyl-CoA followed by oleoyl-CoA as acyl group donors. Functions in phosphatidic acid biosynthesis. May regulate the cellular storage of triacylglycerol through activation of the phospholipase PNPLA2. Involved in keratinocyte differentiation. Regulates lipid droplet fusion. This chain is 1-acylglycerol-3-phosphate O-acyltransferase ABHD5, found in Homo sapiens (Human).